A 117-amino-acid polypeptide reads, in one-letter code: Alpha-endosulfine (117 aa).

Positions 1-53 (MAAPLGTGARAEDSGQEKQDSQEKETVIPERAEEAKLKAKYPNLGQKPGGSDF) are disordered. The segment covering 10–37 (RAEDSGQEKQDSQEKETVIPERAEEAKL) has biased composition (basic and acidic residues). Residue S67 is modified to Phosphoserine; by GWL. Residues 76-117 (KMKNKQLPTAGPDKNLVTGDHIPKPQDLPQRKSSLVASKLAG) are disordered.

The protein belongs to the endosulfine family. Phosphorylation at Ser-67 by GWL during mitosis is essential for interaction with PPP2R2D (PR55-delta) and subsequent inactivation of PP2A.

Its subcellular location is the cytoplasm. Its function is as follows. Protein phosphatase inhibitor that specifically inhibits protein phosphatase 2A (PP2A) during mitosis. When phosphorylated at Ser-67 during mitosis, specifically interacts with PPP2R2D (PR55-delta) and inhibits its activity, leading to inactivation of PP2A, an essential condition to keep cyclin-B1-CDK1 activity high during M phase. In Gallus gallus (Chicken), this protein is Alpha-endosulfine (ENSA).